Consider the following 405-residue polypeptide: L-rhamnonate dehydratase (405 aa).

Substrate-binding residues include H33 and R59. Mg(2+) contacts are provided by D226, E252, and E280. H329 functions as the Proton acceptor in the catalytic mechanism. A substrate-binding site is contributed by E349.

It belongs to the mandelate racemase/muconate lactonizing enzyme family. RhamD subfamily. As to quaternary structure, homooctamer; tetramer of dimers. The cofactor is Mg(2+).

It catalyses the reaction L-rhamnonate = 2-dehydro-3-deoxy-L-rhamnonate + H2O. Catalyzes the dehydration of L-rhamnonate to 2-keto-3-deoxy-L-rhamnonate (KDR). This Salmonella typhi protein is L-rhamnonate dehydratase.